Here is a 185-residue protein sequence, read N- to C-terminus: Ribosome-recycling factor (185 aa).

The tract at residues 140 to 166 is disordered; that stretch reads KRQEKDGDITEDEQRSLEKQVQKVTDD.

The protein belongs to the RRF family.

Its subcellular location is the cytoplasm. Responsible for the release of ribosomes from messenger RNA at the termination of protein biosynthesis. May increase the efficiency of translation by recycling ribosomes from one round of translation to another. This is Ribosome-recycling factor from Lactobacillus johnsonii (strain CNCM I-12250 / La1 / NCC 533).